The following is a 795-amino-acid chain: Protocadherin beta-5 (795 aa).

An N-terminal signal peptide occupies residues 1–30; the sequence is METALAKTPQKRQVMFLAILLLLWEAGSEA. Over 31-689 the chain is Extracellular; sequence VRYSIPEETE…AQADSLTVYL (659 aa). 5 Cadherin domains span residues 35-133, 138-242, 247-346, 351-450, and 455-560; these read IPEE…APEF, MLLK…APEF, YEVQ…APEL, LSSP…APAF, and YTLF…SPFV. A glycan (N-linked (GlcNAc...) asparagine) is linked at Asn169. The residue at position 296 (Lys296) is an N6-acetyllysine. Asn417 and Asn435 each carry an N-linked (GlcNAc...) asparagine glycan. Asn566 carries an N-linked (GlcNAc...) asparagine glycan. The Cadherin 6 domain occupies 567-670; it reads GSAPCTELVP…LVDGFSQPYL (104 aa). Residues 690–710 traverse the membrane as a helical segment; sequence VVALASVSSLFLFSVLLFVAV. Over 711 to 795 the chain is Cytoplasmic; the sequence is RLCRRSRAAP…AAFRNSFGLN (85 aa).

The protein localises to the cell membrane. Its function is as follows. Potential calcium-dependent cell-adhesion protein. May be involved in the establishment and maintenance of specific neuronal connections in the brain. This is Protocadherin beta-5 (PCDHB5) from Homo sapiens (Human).